Reading from the N-terminus, the 593-residue chain is Vitamin H transporter (593 aa).

Over 1-121 (MTISNKSWRS…TTQTKAERRL (121 aa)) the chain is Extracellular. A phosphoserine mark is found at Ser32, Ser33, and Ser43. A helical membrane pass occupies residues 122 to 142 (LYKLDIIIALYFFMLCWSKSV). The Cytoplasmic portion of the chain corresponds to 143-166 (DLNNYTNAYVSNMKEDLNMKGNDY). The helical transmembrane segment at 167–187 (VYTSTIANVGAIVFQLPFMYL) threads the bilayer. Residues 188 to 190 (LPR) lie on the Extracellular side of the membrane. The helical transmembrane segment at 191–211 (FPSHIILPVMDLGWTWFTFAC) threads the bilayer. At 212 to 224 (YRANSLAELRAYR) the chain is on the cytoplasmic side. Residues 225 to 245 (FILSAFGAAYYPVSQYILGCW) traverse the membrane as a helical segment. Residues 246-291 (YAPDEINSRVCLFFCGQQLGSVTSGLLQSRIFKSLNGVHGLAGWRW) lie on the Extracellular side of the membrane. Residues 292 to 312 (MFLIDAIAISLPTAIIGFFVI) form a helical membrane-spanning segment. The Cytoplasmic portion of the chain corresponds to 313–361 (PGVPSKCYSLFLTDEEIRIARARNKRNQIKDGVDKSKLAPLWSRKLWKK). Residues 362–382 (VFCTPAFWVLVVFDTCSWNNM) traverse the membrane as a helical segment. Residues 383–408 (TAYSGSYTLWLKSNTKYSIAQVNNLS) are Extracellular-facing. A helical transmembrane segment spans residues 409 to 429 (VIPACLGFAYVIFCAFGADLF). Residues 430 to 432 (RCK) lie on the Cytoplasmic side of the membrane. Residues 433-453 (WIFMVFAAIMNTVSCALLIKW) form a helical membrane-spanning segment. Residues 454-460 (DIPSKAK) lie on the Extracellular side of the membrane. A helical transmembrane segment spans residues 461–481 (WYAFFTTYFSVAASPCLWSFI). Residues 482–492 (NDFLRFDPQVK) are Cytoplasmic-facing. A helical transmembrane segment spans residues 493–513 (AITWIAIYSFSQSTYAWIPTL). Topologically, residues 514 to 526 (AWPTVESPRFKTG) are extracellular. The chain crosses the membrane as a helical span at residues 527–547 (YTVSLIFGAIYGLWTFVVLFF). At 548–593 (YKRNEKKHALGNGIILYDSNKGEELPEFVKKNMEERDGYYYLKRSS) the chain is on the cytoplasmic side.

It belongs to the major facilitator superfamily. Allantoate permease family.

Its subcellular location is the cell membrane. Involved in uptake of biotin with the concomitant entry of protons. This chain is Vitamin H transporter (VHT1), found in Saccharomyces cerevisiae (strain ATCC 204508 / S288c) (Baker's yeast).